A 443-amino-acid chain; its full sequence is Palmitoyltransferase pfa5 (443 aa).

2 consecutive transmembrane segments (helical) span residues 17 to 37 (IIPP…TKPL) and 57 to 77 (AGAA…ATYL). The disordered stretch occupies residues 96 to 137 (CTQNQTGSDGSKHRHRRHRRRKSGHHLSKTTEKTDRSDGGDV). Positions 107-123 (KHRHRRHRRRKSGHHLS) are enriched in basic residues. Residues 124 to 137 (KTTEKTDRSDGGDV) are compositionally biased toward basic and acidic residues. Positions 175-225 (VYCSTCCQFKTDRAHHCREVDRCVRKMDHFCPWVGGVVSETSFKFFIQFIV) constitute a DHHC domain. The next 2 helical transmembrane spans lie at 220-240 (FIQF…VFAI) and 256-276 (WIVC…VAIS). Residues 410 to 443 (AGLEVSTESESADPVGAAETPQHEQRRGKHRRRN) are disordered.

It belongs to the DHHC palmitoyltransferase family. PFA5 subfamily. In terms of processing, autopalmitoylated.

Its subcellular location is the membrane. The catalysed reaction is L-cysteinyl-[protein] + hexadecanoyl-CoA = S-hexadecanoyl-L-cysteinyl-[protein] + CoA. The polypeptide is Palmitoyltransferase pfa5 (pfa5) (Aspergillus fumigatus (strain ATCC MYA-4609 / CBS 101355 / FGSC A1100 / Af293) (Neosartorya fumigata)).